The sequence spans 206 residues: LexA repressor (206 aa).

A DNA-binding region (H-T-H motif) is located at residues 28 to 48 (RAEIATRLGFKSANAAEEHLK). Active-site for autocatalytic cleavage activity residues include Ser123 and Lys160.

This sequence belongs to the peptidase S24 family. In terms of assembly, homodimer.

The catalysed reaction is Hydrolysis of Ala-|-Gly bond in repressor LexA.. Its function is as follows. Represses a number of genes involved in the response to DNA damage (SOS response), including recA and lexA. In the presence of single-stranded DNA, RecA interacts with LexA causing an autocatalytic cleavage which disrupts the DNA-binding part of LexA, leading to derepression of the SOS regulon and eventually DNA repair. The polypeptide is LexA repressor (Shewanella sp. (strain MR-4)).